A 530-amino-acid polypeptide reads, in one-letter code: Protein SLOW WALKER 1 (530 aa).

7 WD repeats span residues 50–89, 91–130, 133–173, 176–216, 220–258, 262–304, and 320–363; these read NLVS…SSRR, SFRD…ALRT, SHSA…VISD, GHKD…SNWI, NHGL…KMVC, SHNK…VTYS, and GSTR…DESR. The Nuclear localization signal signature appears at 392 to 399; it reads EKKGLKLT.

As to expression, expressed in cells undergoing active cell divisions, including functional megaspores and the female gametophytic cells. Accumulates in roots, stems, leaves, inflorescences and siliques.

It localises to the nucleus. The protein resides in the nucleolus. Essential protein required for nuclear division and organization during embryo sac development in female gametophyte, probably by promoting rRNA biogenesis essential for the progression of the mitotic division cycles during gametogenesis. Involved in nucleolar processing of pre-18S ribosomal RNA. The protein is Protein SLOW WALKER 1 of Arabidopsis thaliana (Mouse-ear cress).